A 106-amino-acid chain; its full sequence is COX assembly mitochondrial protein homolog (106 aa).

A2 bears the N-acetylalanine mark. The 44-residue stretch at 28 to 71 folds into the CHCH domain; sequence RERCSEQVQDFTKCCKDSGVLMVVKCRKENSALKDCLTSYYKDP. 2 consecutive short sequence motifs (cx9C motif) follow at residues 31 to 41 and 53 to 63; these read CSEQVQDFTKC and CRKENSALKDC. 2 cysteine pairs are disulfide-bonded: C31–C63 and C41–C53.

The protein belongs to the CMC family. In terms of assembly, component of the MITRAC (mitochondrial translation regulation assembly intermediate of cytochrome c oxidase complex) complex, the core components of this complex being COA3/MITRAC12 and COX14.

The protein localises to the mitochondrion. Component of the MITRAC (mitochondrial translation regulation assembly intermediate of cytochrome c oxidase complex) complex, that regulates cytochrome c oxidase assembly. This chain is COX assembly mitochondrial protein homolog (CMC1), found in Bos taurus (Bovine).